The primary structure comprises 365 residues: Chorismate synthase (365 aa).

NADP(+) is bound at residue arginine 47. FMN-binding positions include 124–126 (RAS), glycine 287, 302–306 (KPTAT), and arginine 328. The interval 266 to 290 (FIKSDDSSKLRTTSNNSGGIQGGIS) is disordered.

The protein belongs to the chorismate synthase family. As to quaternary structure, homotetramer. It depends on FMNH2 as a cofactor.

It carries out the reaction 5-O-(1-carboxyvinyl)-3-phosphoshikimate = chorismate + phosphate. It functions in the pathway metabolic intermediate biosynthesis; chorismate biosynthesis; chorismate from D-erythrose 4-phosphate and phosphoenolpyruvate: step 7/7. Catalyzes the anti-1,4-elimination of the C-3 phosphate and the C-6 proR hydrogen from 5-enolpyruvylshikimate-3-phosphate (EPSP) to yield chorismate, which is the branch point compound that serves as the starting substrate for the three terminal pathways of aromatic amino acid biosynthesis. This reaction introduces a second double bond into the aromatic ring system. The chain is Chorismate synthase from Prochlorococcus marinus (strain MIT 9301).